A 368-amino-acid polypeptide reads, in one-letter code: Phosphotransferase IIC component GlvC (368 aa).

Residues 1–11 (MLSQIQRFGGA) are Periplasmic-facing. In terms of domain architecture, PTS EIIC type-1 spans 1-368 (MLSQIQRFGG…VGNMGGGLID (368 aa)). A helical transmembrane segment spans residues 12–32 (MFTPVLLFPFAGIVVGLAILL). Residues 33–59 (QNPMFVGESLTDPNSLFAQIVHIIEEG) lie on the Cytoplasmic side of the membrane. Residues 60–80 (GWTVFRNMPLIFAVGLPIGLA) traverse the membrane as a helical segment. Topologically, residues 81-86 (KQAQGR) are periplasmic. Residues 87–107 (ACLAVMVSFLTWNYFINAMGM) traverse the membrane as a helical segment. At 108-129 (TWGSYFGVDFTQDAVAGSGLTM) the chain is on the cytoplasmic side. A helical membrane pass occupies residues 130–150 (MAGIKTLDTSIIGAIIISGIV). At 151–173 (TALHNRLFDKKLPVFLGIFQGTS) the chain is on the periplasmic side. A helical transmembrane segment spans residues 174-194 (YVVIIAFLVMIPCAWLTLLGW). Residues 195 to 198 (PKVQ) lie on the Cytoplasmic side of the membrane. Residues 199-221 (MGIESLQAFLRSAGALGVWVYTF) traverse the membrane as a helical segment. At 222-224 (LER) the chain is on the periplasmic side. A helical membrane pass occupies residues 225–245 (ILIPTGLHHFIYGQFIFGPAA). Residues 246–276 (VEGGIQMYWAQHLQEFSLSAEPLKSLFPEGG) lie on the Cytoplasmic side of the membrane. Residues 277–297 (FALHGNSKIFGAVGISLAMYF) form a helical membrane-spanning segment. The Periplasmic portion of the chain corresponds to 298 to 306 (TAAPENRVK). The chain crosses the membrane as a helical span at residues 307-327 (VAGLLIPATLTAMLVGITEPL). A topological domain (cytoplasmic) is located at residue glutamate 328. Residues 329-349 (FTFLFISPLLFAVHAVLAASM) traverse the membrane as a helical segment. Residues 350–368 (STVMYLFGVVGNMGGGLID) lie on the Periplasmic side of the membrane.

The protein localises to the cell inner membrane. The phosphoenolpyruvate-dependent sugar phosphotransferase system (PTS), a major carbohydrate active -transport system, catalyzes the phosphorylation of incoming sugar substrates concomitant with their translocation across the cell membrane. This operon may be cryptic in wild-type K12 strains. The sequence is that of Phosphotransferase IIC component GlvC from Escherichia coli (strain K12).